Reading from the N-terminus, the 265-residue chain is Di-trans,poly-cis-undecaprenyl-diphosphate synthase (265 aa).

An RXG motif; crucial for prenyltransferase activity motif is present at residues 236–238 (RFG).

The protein belongs to the UPP synthase family. Mg(2+) is required as a cofactor.

The catalysed reaction is 8 isopentenyl diphosphate + (2E,6E)-farnesyl diphosphate = di-trans,octa-cis-undecaprenyl diphosphate + 8 diphosphate. It participates in protein modification; protein glycosylation. It functions in the pathway lipid metabolism. Cis-prenyl transferase involved in the synthesis of dolichol, a long-chain polyprenol that is utilized as a sugar carrier in protein glycosylation in the endoplasmic reticulum (ER). Catalyzes the sequential condensation of isopentenyl pyrophosphate (IPP) with farnesyl pyrophosphate (FPP) to produce a polyprenyl pyrophosphate which contains 11 (major) and 12 (minor) isoprene units. The protein is Di-trans,poly-cis-undecaprenyl-diphosphate synthase of Giardia intestinalis (strain ATCC 50803 / WB clone C6) (Giardia lamblia).